Consider the following 166-residue polypeptide: uncharacterized protein (166 aa).

Transmembrane regions (helical) follow at residues 7-27, 30-50, 69-89, and 92-112; these read VLFK…SLFY, FLFA…YCYI, IETL…KSLL, and NSFF…LVLF.

It to M.jannaschii MJ0795.1 and MJ0785.1.

It localises to the cell membrane. This is an uncharacterized protein from Methanocaldococcus jannaschii (strain ATCC 43067 / DSM 2661 / JAL-1 / JCM 10045 / NBRC 100440) (Methanococcus jannaschii).